A 216-amino-acid polypeptide reads, in one-letter code: Adenylate kinase (216 aa).

10–15 (GAGKGT) is an ATP binding site. The tract at residues 30–59 (STGDIFRKNISENTPLGIEAKGYIDNGQLV) is NMP. AMP contacts are provided by residues threonine 31, arginine 36, 57–59 (QLV), 85–88 (GFPR), and glutamine 92. Residues 126 to 163 (GRRVCPSCGASYHVKFNPPTNEGKCDLCGSEVIQRKDD) form an LID region. Arginine 127 serves as a coordination point for ATP. Zn(2+) is bound by residues cysteine 130 and cysteine 133. 136–137 (SY) provides a ligand contact to ATP. Positions 150 and 153 each coordinate Zn(2+). Residues arginine 160 and arginine 171 each contribute to the AMP site. Lysine 199 is an ATP binding site.

The protein belongs to the adenylate kinase family. In terms of assembly, monomer.

The protein resides in the cytoplasm. The enzyme catalyses AMP + ATP = 2 ADP. It participates in purine metabolism; AMP biosynthesis via salvage pathway; AMP from ADP: step 1/1. Its function is as follows. Catalyzes the reversible transfer of the terminal phosphate group between ATP and AMP. Plays an important role in cellular energy homeostasis and in adenine nucleotide metabolism. The sequence is that of Adenylate kinase from Clostridium beijerinckii (strain ATCC 51743 / NCIMB 8052) (Clostridium acetobutylicum).